We begin with the raw amino-acid sequence, 440 residues long: Thymidine phosphorylase (440 aa).

Belongs to the thymidine/pyrimidine-nucleoside phosphorylase family. Homodimer.

The enzyme catalyses thymidine + phosphate = 2-deoxy-alpha-D-ribose 1-phosphate + thymine. The protein operates within pyrimidine metabolism; dTMP biosynthesis via salvage pathway; dTMP from thymine: step 1/2. Its function is as follows. The enzymes which catalyze the reversible phosphorolysis of pyrimidine nucleosides are involved in the degradation of these compounds and in their utilization as carbon and energy sources, or in the rescue of pyrimidine bases for nucleotide synthesis. The protein is Thymidine phosphorylase of Yersinia enterocolitica serotype O:8 / biotype 1B (strain NCTC 13174 / 8081).